The following is a 247-amino-acid chain: 6-carboxyhexanoate--CoA ligase (247 aa).

The protein belongs to the BioW family. Homodimer. Mg(2+) is required as a cofactor.

It catalyses the reaction heptanedioate + ATP + CoA = 6-carboxyhexanoyl-CoA + AMP + diphosphate. It functions in the pathway metabolic intermediate metabolism; pimeloyl-CoA biosynthesis; pimeloyl-CoA from pimelate: step 1/1. In terms of biological role, catalyzes the transformation of pimelate into pimeloyl-CoA with concomitant hydrolysis of ATP to AMP. The protein is 6-carboxyhexanoate--CoA ligase of Persephonella marina (strain DSM 14350 / EX-H1).